Here is a 299-residue protein sequence, read N- to C-terminus: Glutamate formimidoyltransferase (299 aa).

His-82 (for formimidoyltransferase activity) is an active-site residue. 163 to 172 (GDRKIHPTAG) lines the folate pocket.

Belongs to the formiminotransferase family.

It localises to the cytoplasm. It carries out the reaction (6S)-5-formyl-5,6,7,8-tetrahydrofolate + L-glutamate = N-formyl-L-glutamate + (6S)-5,6,7,8-tetrahydrofolate + H(+). The enzyme catalyses 5-formimidoyltetrahydrofolate + L-glutamate = N-formimidoyl-L-glutamate + (6S)-5,6,7,8-tetrahydrofolate. It catalyses the reaction (6S)-5-formyl-5,6,7,8-tetrahydrofolate + ATP = (6R)-5,10-methenyltetrahydrofolate + ADP + phosphate. Its pathway is amino-acid degradation; L-histidine degradation into L-glutamate; L-glutamate from N-formimidoyl-L-glutamate (transferase route): step 1/1. It functions in the pathway one-carbon metabolism; tetrahydrofolate interconversion. Functionally, catalyzes the transfer of the formyl group from N-formylglutamate to tetrahydrofolate (THF) to yield 5-formyltetrahydrofolate (5-CHO-THF) and glutamate (Glu). The triglutamate form of 5-CHO-THF (5-CHO-THF-Glu3) can also be used as substrate. It can also catalyze the transfer of the formimino group from N-formiminoglutamate to tetrahydrofolate (THF) to yield 5-formiminotetrahydrofolate (5-NH=CH-THF) and glutamate (Glu). It can replace YgfA to catalyze the irreversible ATP-dependent transformation of 5-CHO-THF to form 5,10-methenyltetrahydrofolate (5,10-CH=THF). This Streptococcus pyogenes serotype M1 protein is Glutamate formimidoyltransferase.